An 868-amino-acid polypeptide reads, in one-letter code: Leucine--tRNA ligase (868 aa).

Positions 42–52 (PYPSGKLHMGH) match the 'HIGH' region motif. The 'KMSKS' region motif lies at 627 to 631 (KMSKS). ATP is bound at residue K630.

Belongs to the class-I aminoacyl-tRNA synthetase family.

The protein localises to the cytoplasm. It catalyses the reaction tRNA(Leu) + L-leucine + ATP = L-leucyl-tRNA(Leu) + AMP + diphosphate. In Pseudomonas entomophila (strain L48), this protein is Leucine--tRNA ligase.